Here is a 98-residue protein sequence, read N- to C-terminus: Integration host factor subunit alpha (98 aa).

Residues 52 to 73 (FDLRQKSERPGRNPKTGEDIPI) are disordered. Residues 54–73 (LRQKSERPGRNPKTGEDIPI) show a composition bias toward basic and acidic residues.

The protein belongs to the bacterial histone-like protein family. In terms of assembly, heterodimer of an alpha and a beta chain.

Functionally, this protein is one of the two subunits of integration host factor, a specific DNA-binding protein that functions in genetic recombination as well as in transcriptional and translational control. This is Integration host factor subunit alpha from Pseudoalteromonas atlantica (strain T6c / ATCC BAA-1087).